The following is a 163-amino-acid chain: UPF0587 protein CG4646 (163 aa).

Cys-33, Cys-36, Cys-68, and Cys-71 together coordinate Zn(2+).

This sequence belongs to the UPF0587 family.

The sequence is that of UPF0587 protein CG4646 from Drosophila melanogaster (Fruit fly).